Here is a 292-residue protein sequence, read N- to C-terminus: Ribosomal protein L11 methyltransferase (292 aa).

4 residues coordinate S-adenosyl-L-methionine: T144, G165, D187, and N229.

Belongs to the methyltransferase superfamily. PrmA family.

The protein resides in the cytoplasm. It carries out the reaction L-lysyl-[protein] + 3 S-adenosyl-L-methionine = N(6),N(6),N(6)-trimethyl-L-lysyl-[protein] + 3 S-adenosyl-L-homocysteine + 3 H(+). Its function is as follows. Methylates ribosomal protein L11. This is Ribosomal protein L11 methyltransferase from Pseudomonas putida (strain GB-1).